Here is a 216-residue protein sequence, read N- to C-terminus: GTP-binding nuclear protein Ran, testis-specific isoform (216 aa).

Residue alanine 2 is modified to N-acetylalanine. Residues 7–171 enclose the Small GTPase Ran-type domain; that stretch reads PQVQFKVVLV…FWLARKLIGD (165 aa). 17–24 lines the GTP pocket; it reads GDGGTGKT. A Phosphothreonine modification is found at threonine 24. Residues 37–45 form a switch-I region; sequence KEYVATLGV. Lysine 60 is modified (N6-acetyllysine). 65 to 69 contributes to the GTP binding site; it reads DTAGQ. A switch-II region spans residues 68 to 84; it reads GQEKFGGLRDGYYIQAQ. At lysine 71 the chain carries N6-acetyllysine; alternate. Lysine 71 is covalently cross-linked (Glycyl lysine isopeptide (Lys-Gly) (interchain with G-Cter in SUMO2); alternate). Lysine 71 participates in a covalent cross-link: Glycyl lysine isopeptide (Lys-Gly) (interchain with G-Cter in ubiquitin); alternate. Lysine 99 carries the post-translational modification N6-acetyllysine. 122 to 125 serves as a coordination point for GTP; the sequence is NKVD. N6-acetyllysine is present on lysine 134. N6-acetyllysine; alternate is present on lysine 159. The residue at position 159 (lysine 159) is an N6-succinyllysine; alternate.

This sequence belongs to the small GTPase superfamily. Ran family. As to expression, testis specific.

The protein localises to the nucleus. It catalyses the reaction GTP + H2O = GDP + phosphate + H(+). Functionally, GTP-binding protein involved in nucleocytoplasmic transport. Required for the import of protein into the nucleus and also for RNA export. Involved in chromatin condensation and control of cell cycle. The protein is GTP-binding nuclear protein Ran, testis-specific isoform (Rasl2-9) of Mus musculus (Mouse).